A 412-amino-acid chain; its full sequence is MTPTKPKVYIVGVGMTKFCKPGSVPGWDYPDMVKEAVTTALDDCKMKYSDIQQATVGYLFGGTCCGQRALYEVGLTGIPIFNVNNACASGSSGLFLGKQIIESGNSDVVLCAGFERMAPGSLENLAAPIDDRALSVDKHISVMSETYGLEPAPMTAQMFGNAAKEHMEKYGSKREHYAKIAYKNHLHSVHNPKSQFTKEFSLDQVINARKIYDFMGLLECSPTSDGAAAAVLVSEKFLEKNPRLKAQAVEIVGLKLGTDEPSVFAENSNIKMIGFDMIQKLAKQLWAETKLTPNDVQVIELHDCFAPNELITYEAIGLCPVGQGHHIVDRNDNTYGGKWVINPSGGLISKGHPIGATGVAQAVELSNQLRGKCGKRQVPNCKVAMQHNIGIGGAGVVGLYRLGFPGAAQSKI.

Positions 410–412 (SKI) match the Microbody targeting signal motif.

It belongs to the thiolase-like superfamily. Thiolase family. Expressed in intestine, hypodermis and body-wall muscle.

It is found in the peroxisome. The catalysed reaction is choloyl-CoA + propanoyl-CoA = 3alpha,7alpha,12alpha-trihydroxy-24-oxo-5beta-cholestan-26-oyl-CoA + CoA. Inhibited by acetyl-CoA. Catalyzes the thiolytic cleavage of 3-ketoacyl-CoA with 8-16 carbon residues in the acyl group using a ping-pong mechanism whereby binding to 3-ketooctanoyl-CoA results in the release of acetyl-CoA and the subsequent addition of CoA produces 3-ketohexanohyl-CoA. Involved in the biosynthesis of the dauer pheromone by providing short chains of fatty acid that are attached to the ascarylose sugars of the pheromone. The protein is Non-specific lipid-transfer protein-like 2 of Caenorhabditis elegans.